A 443-amino-acid polypeptide reads, in one-letter code: Phosphoglucosamine mutase (443 aa).

Ser-101 (phosphoserine intermediate) is an active-site residue. The Mg(2+) site is built by Ser-101, Asp-239, Asp-241, and Asp-243. Residue Ser-101 is modified to Phosphoserine.

This sequence belongs to the phosphohexose mutase family. The cofactor is Mg(2+). Activated by phosphorylation.

The enzyme catalyses alpha-D-glucosamine 1-phosphate = D-glucosamine 6-phosphate. Catalyzes the conversion of glucosamine-6-phosphate to glucosamine-1-phosphate. The sequence is that of Phosphoglucosamine mutase from Francisella tularensis subsp. holarctica (strain FTNF002-00 / FTA).